The primary structure comprises 433 residues: Protein slt1 (433 aa).

3 disordered regions span residues 159-184, 200-234, and 252-433; these read SPEESSESQAEVADQQTGPYSTSEYA, NAPEQQSGPDVAELNTLPNRSKTSSQASVSDEELS, and SNKR…DEDA. 2 stretches are compositionally biased toward polar residues: residues 172-184 and 215-228; these read DQQTGPYSTSEYA and TLPNRSKTSSQASV. A phosphoserine mark is found at Ser-227, Ser-229, and Ser-269. Positions 343 to 353 are enriched in basic and acidic residues; that stretch reads IDTKAGEKLTD. The segment covering 385–421 has biased composition (polar residues); that stretch reads EGSNNHEQGSFNEPKSNVDSNDSASPKRPSSQASLRH. Phosphoserine occurs at positions 409, 415, and 418.

The polypeptide is Protein slt1 (slt1) (Schizosaccharomyces pombe (strain 972 / ATCC 24843) (Fission yeast)).